A 153-amino-acid chain; its full sequence is UPF0540 protein At1g62220 (153 aa).

Positions 1-21 are cleaved as a signal peptide; the sequence is MNATKFVVLLVISVLCAIVTA. Disordered regions lie at residues 63–82 and 122–153; these read SSAT…YENG and ARAN…GKKD. The segment covering 122 to 132 has biased composition (low complexity); it reads ARANGKVASAS. The span at 141–153 shows a compositional bias: basic residues; the sequence is KKGKGKKGKGKKD.

Belongs to the UPF0540 family.

The polypeptide is UPF0540 protein At1g62220 (Arabidopsis thaliana (Mouse-ear cress)).